Here is a 556-residue protein sequence, read N- to C-terminus: 2-succinyl-5-enolpyruvyl-6-hydroxy-3-cyclohexene-1-carboxylate synthase (556 aa).

The protein belongs to the TPP enzyme family. MenD subfamily. Homodimer. Requires Mg(2+) as cofactor. Mn(2+) serves as cofactor. It depends on thiamine diphosphate as a cofactor.

The catalysed reaction is isochorismate + 2-oxoglutarate + H(+) = 5-enolpyruvoyl-6-hydroxy-2-succinyl-cyclohex-3-ene-1-carboxylate + CO2. The protein operates within quinol/quinone metabolism; 1,4-dihydroxy-2-naphthoate biosynthesis; 1,4-dihydroxy-2-naphthoate from chorismate: step 2/7. It functions in the pathway quinol/quinone metabolism; menaquinone biosynthesis. Catalyzes the thiamine diphosphate-dependent decarboxylation of 2-oxoglutarate and the subsequent addition of the resulting succinic semialdehyde-thiamine pyrophosphate anion to isochorismate to yield 2-succinyl-5-enolpyruvyl-6-hydroxy-3-cyclohexene-1-carboxylate (SEPHCHC). In Staphylococcus epidermidis (strain ATCC 35984 / DSM 28319 / BCRC 17069 / CCUG 31568 / BM 3577 / RP62A), this protein is 2-succinyl-5-enolpyruvyl-6-hydroxy-3-cyclohexene-1-carboxylate synthase.